The following is a 451-amino-acid chain: Vitamin D3 receptor (451 aa).

The segment at residues 44 to 112 (PRICGVCGDR…RLKRCVDIGM (69 aa)) is a DNA-binding region (nuclear receptor). Zn(2+) contacts are provided by cysteine 47, cysteine 50, cysteine 64, cysteine 67, cysteine 83, cysteine 89, cysteine 99, and cysteine 102. 2 consecutive NR C4-type zinc fingers follow at residues 47-67 (CGVC…CEGC) and 83-107 (CPFN…LKRC). Hinge regions lie at residues 113-149 (MKEF…KLSE) and 120-149 (DEEV…KLSE). Residues 150–447 (EQQKVIDTLL…LTPLVLEVFG (298 aa)) enclose the NR LBD domain. Calcitriol is bound at residue serine 261. Residues 270-288 (KMIPGFRDLTAEDQIALLK) are interaction with coactivator LXXLL motif. Calcitriol contacts are provided by arginine 298, serine 302, histidine 329, and histidine 421. A 9aaTAD motif is present at residues 440-448 (PLVLEVFGN).

It belongs to the nuclear hormone receptor family. NR1 subfamily. As to quaternary structure, homodimer in the absence of bound vitamin D3. Heterodimer with RXRA after vitamin D3 binding. Expressed in kidney and intestine.

Its subcellular location is the nucleus. It localises to the cytoplasm. Functionally, nuclear receptor for calcitriol, the active form of vitamin D3 which mediates the action of this vitamin on cells. Enters the nucleus upon vitamin D3 binding where it forms heterodimers with the retinoid X receptor/RXR. The VDR-RXR heterodimers bind to specific response elements on DNA and activate the transcription of vitamin D3-responsive target genes. Plays a central role in calcium homeostasis. Also functions as a receptor for the secondary bile acid lithocholic acid (LCA) and its metabolites. The protein is Vitamin D3 receptor (VDR) of Gallus gallus (Chicken).